Here is a 311-residue protein sequence, read N- to C-terminus: MGLSTRDILDMGSLSRKDISLVLDTARSMKEISLRPVKKVPTLRGKTVVSFFYEPSTRTKVSFDVAAKRLSADSISLSVATSSMTKGETLLDTVKNLERMSPDVVVIRHSSAGVPHMLARHVSVPVINAGDGMHAHPSQALLDMMTVQEKKGRIEGLRLAIIGDIARSRVARSNVEGFLKMGASVVLAAPPTMIPVGVETFGADVTHNVDEAIAGADVIMMLRIQKERAAAFLFSTVREYARTYGLTANRLKNAKKDVLIMHPGPVNRGVEIAPEVADGPYSVILDQVENGVAVRMALFYLVMGGQRDAGD.

Carbamoyl phosphate-binding residues include Arg-58 and Thr-59. An L-aspartate-binding site is contributed by Lys-86. Carbamoyl phosphate-binding residues include Arg-108, His-136, and Gln-139. Residues Arg-169 and Arg-223 each coordinate L-aspartate. Residues Gly-264 and Pro-265 each coordinate carbamoyl phosphate.

Belongs to the aspartate/ornithine carbamoyltransferase superfamily. ATCase family. Heterododecamer (2C3:3R2) of six catalytic PyrB chains organized as two trimers (C3), and six regulatory PyrI chains organized as three dimers (R2).

It carries out the reaction carbamoyl phosphate + L-aspartate = N-carbamoyl-L-aspartate + phosphate + H(+). It participates in pyrimidine metabolism; UMP biosynthesis via de novo pathway; (S)-dihydroorotate from bicarbonate: step 2/3. Functionally, catalyzes the condensation of carbamoyl phosphate and aspartate to form carbamoyl aspartate and inorganic phosphate, the committed step in the de novo pyrimidine nucleotide biosynthesis pathway. The protein is Aspartate carbamoyltransferase catalytic subunit of Desulfosudis oleivorans (strain DSM 6200 / JCM 39069 / Hxd3) (Desulfococcus oleovorans).